Here is a 303-residue protein sequence, read N- to C-terminus: Ornithine carbamoyltransferase (303 aa).

Carbamoyl phosphate-binding positions include 52–55 (STRT), Gln-79, Arg-103, and 130–133 (HPCQ). L-ornithine is bound by residues Asn-161, Asp-222, and 226 to 227 (SM). Carbamoyl phosphate contacts are provided by residues 262–263 (CL) and Arg-290.

The protein belongs to the aspartate/ornithine carbamoyltransferase superfamily. OTCase family.

The protein resides in the cytoplasm. It catalyses the reaction carbamoyl phosphate + L-ornithine = L-citrulline + phosphate + H(+). It participates in amino-acid biosynthesis; L-arginine biosynthesis; L-arginine from L-ornithine and carbamoyl phosphate: step 1/3. Its function is as follows. Reversibly catalyzes the transfer of the carbamoyl group from carbamoyl phosphate (CP) to the N(epsilon) atom of ornithine (ORN) to produce L-citrulline. The chain is Ornithine carbamoyltransferase from Geobacter sulfurreducens (strain ATCC 51573 / DSM 12127 / PCA).